A 252-amino-acid polypeptide reads, in one-letter code: 2-succinyl-6-hydroxy-2,4-cyclohexadiene-1-carboxylate synthase (252 aa).

It belongs to the AB hydrolase superfamily. MenH family. As to quaternary structure, monomer.

The catalysed reaction is 5-enolpyruvoyl-6-hydroxy-2-succinyl-cyclohex-3-ene-1-carboxylate = (1R,6R)-6-hydroxy-2-succinyl-cyclohexa-2,4-diene-1-carboxylate + pyruvate. Its pathway is quinol/quinone metabolism; 1,4-dihydroxy-2-naphthoate biosynthesis; 1,4-dihydroxy-2-naphthoate from chorismate: step 3/7. The protein operates within quinol/quinone metabolism; menaquinone biosynthesis. Functionally, catalyzes a proton abstraction reaction that results in 2,5-elimination of pyruvate from 2-succinyl-5-enolpyruvyl-6-hydroxy-3-cyclohexene-1-carboxylate (SEPHCHC) and the formation of 2-succinyl-6-hydroxy-2,4-cyclohexadiene-1-carboxylate (SHCHC). The protein is 2-succinyl-6-hydroxy-2,4-cyclohexadiene-1-carboxylate synthase of Salmonella paratyphi A (strain ATCC 9150 / SARB42).